Reading from the N-terminus, the 494-residue chain is Fumigaclavine B O-acetyltransferase easN (494 aa).

Belongs to the fumigaclavine B O-acetyltransferase family. In terms of assembly, monomer.

The enzyme catalyses fumigaclavine B + acetyl-CoA = fumigaclavine A + CoA. It functions in the pathway alkaloid biosynthesis; ergot alkaloid biosynthesis. Functionally, fumigaclavine B O-acetyltransferase; part of the gene cluster that mediates the biosynthesis of fumiclavanine C, a fungal ergot alkaloid. DmaW catalyzes the first step of ergot alkaloid biosynthesis by condensing dimethylallyl diphosphate (DMAP) and tryptophan to form 4-dimethylallyl-L-tryptophan. The second step is catalyzed by the methyltransferase easF that methylates 4-dimethylallyl-L-tryptophan in the presence of S-adenosyl-L-methionine, resulting in the formation of 4-dimethylallyl-L-abrine. The catalase easC and the FAD-dependent oxidoreductase easE then transform 4-dimethylallyl-L-abrine to chanoclavine-I which is further oxidized by EasD in the presence of NAD(+), resulting in the formation of chanoclavine-I aldehyde. EasA reduces chanoclavine-I aldehyde to dihydrochanoclavine-I aldehyde that spontaneously dehydrates to form 6,8-dimethyl-6,7-didehydroergoline. EasG then catalyzes the reduction of 6,8-dimethyl-6,7-didehydroergoline to form festuclavine. Hydrolysis of festuclavine by easM then leads to the formation of fumigaclavine B which is in turn acetylated by easN to fumigaclavine A. Finally, easL catalyzes the conversion of fumigaclavine A into fumigaclavine C by attaching a dimethylallyl moiety to C-2 of the indole nucleus. The protein is Fumigaclavine B O-acetyltransferase easN of Aspergillus fumigatus (strain ATCC MYA-4609 / CBS 101355 / FGSC A1100 / Af293) (Neosartorya fumigata).